The sequence spans 160 residues: Myosin regulatory light chain, smooth muscle (160 aa).

Serine 1 bears the Blocked amino end (Ser) mark. Serine 11 is modified (phosphoserine). EF-hand domains lie at 20 to 55 (NQIQ…LGTA) and 88 to 123 (DPEE…MGDN). Ca(2+)-binding residues include aspartate 33, asparagine 35, aspartate 37, and aspartate 44.

Its function is as follows. In molluscan muscle, calcium regulation is associated with myosin rather than with actin. Muscle myosin contains two types of light chains: the catalytic light chain, essential for ATPase activity, and the regulatory light chain, a calcium-binding protein responsible for Ca(2+) dependent binding and Ca(2+) dependent Mg-ATPase activity. This chain is Myosin regulatory light chain, smooth muscle, found in Spisula sachalinensis (Sakhalin surf-clam).